The following is a 523-amino-acid chain: 2-oxopropyl-CoM reductase, carboxylating (523 aa).

A53 to A54 contacts FAD. R56 contacts 2-oxopropyl-coenzyme M. S81 contacts FAD. C82 lines the 2-oxopropyl-coenzyme M pocket. A disulfide bond links C82 and C87. A158 is an FAD binding site. NADP(+)-binding positions include G222–T225 and R245–T246. Residue D353 participates in FAD binding. Residue E360 coordinates NADP(+). M361 contacts FAD. Residue R365 participates in 2-oxopropyl-coenzyme M binding. An FAD-binding site is contributed by F501.

Belongs to the class-I pyridine nucleotide-disulfide oxidoreductase family. As to quaternary structure, homodimer. Component II of the aliphatic epoxide carboxylation complex together with components I, III and IV. The cofactor is FAD.

It carries out the reaction coenzyme M + acetoacetate + NADP(+) = 2-oxopropyl-coenzyme M + CO2 + NADPH. The protein operates within alkene metabolism; propylene degradation. Inhibited (at 40%) by the coenzyme M analog 2-bromoethanesulfonate (BES). BES is a time-dependent inactivator of dithiothreitol-reduced 2-KPCC, where the redox active cysteines are in the free thiol forms. BES does not inactivate air-oxidized 2-KPCC, where the redox active cysteine pair is in the disulfide form. BES specifically alkylates the interchange thiol that facilitates thioether bond cleavage and enolacetone formation during catalysis. Involved in aliphatic epoxide carboxylation. Catalyzes the reductive cleavage of the thioether bond of 2-oxopropyl-coenzyme M (2-KPC), and the subsequent carboxylation of the ketopropyl cleavage product, yielding the products acetoacetate and free coenzyme M. This Xanthobacter autotrophicus (strain ATCC BAA-1158 / Py2) protein is 2-oxopropyl-CoM reductase, carboxylating.